A 232-amino-acid polypeptide reads, in one-letter code: 7-cyano-7-deazaguanine synthase (232 aa).

8-18 contacts ATP; it reads FSGGQDSTTCL. Positions 189, 198, 201, and 204 each coordinate Zn(2+).

This sequence belongs to the QueC family. It depends on Zn(2+) as a cofactor.

It carries out the reaction 7-carboxy-7-deazaguanine + NH4(+) + ATP = 7-cyano-7-deazaguanine + ADP + phosphate + H2O + H(+). Its pathway is purine metabolism; 7-cyano-7-deazaguanine biosynthesis. In terms of biological role, catalyzes the ATP-dependent conversion of 7-carboxy-7-deazaguanine (CDG) to 7-cyano-7-deazaguanine (preQ(0)). This is 7-cyano-7-deazaguanine synthase from Photorhabdus laumondii subsp. laumondii (strain DSM 15139 / CIP 105565 / TT01) (Photorhabdus luminescens subsp. laumondii).